The chain runs to 150 residues: MAGQNRNKDFLIVSKDILPEAILKTAQAKELLVKGDANTINEAVDRVQLSRSAFYKYKDGVFPFYEASREKIITFSLTLENTAGVLSNVLNTIARFKANVLTINQGIPLQGIANVTISVENMGMVDIPENLLSALGEIDGVRKIEVIGQN.

One can recognise an ACT domain in the interval 74-149 (TFSLTLENTA…GVRKIEVIGQ (76 aa)).

Belongs to the UPF0735 family.

The sequence is that of UPF0735 ACT domain-containing protein DSY2247 from Desulfitobacterium hafniense (strain Y51).